The sequence spans 258 residues: NAD-dependent protein deacylase (258 aa).

Positions 3-258 (ERQLEKSIEH…LPALMRGLSA (256 aa)) constitute a Deacetylase sirtuin-type domain. Residue 28–48 (GAGMSADSGLETYRDDKTGLW) coordinates NAD(+). Substrate contacts are provided by tyrosine 73 and arginine 76. Residue 109–112 (QNID) coordinates NAD(+). Histidine 127 acts as the Proton acceptor in catalysis. Zn(2+) contacts are provided by cysteine 135, cysteine 138, cysteine 161, and cysteine 164. Residues 201–203 (GTS) and alanine 245 contribute to the NAD(+) site.

It belongs to the sirtuin family. Class III subfamily. Zn(2+) is required as a cofactor.

It localises to the cytoplasm. It catalyses the reaction N(6)-acetyl-L-lysyl-[protein] + NAD(+) + H2O = 2''-O-acetyl-ADP-D-ribose + nicotinamide + L-lysyl-[protein]. The enzyme catalyses N(6)-succinyl-L-lysyl-[protein] + NAD(+) + H2O = 2''-O-succinyl-ADP-D-ribose + nicotinamide + L-lysyl-[protein]. Its function is as follows. NAD-dependent lysine deacetylase and desuccinylase that specifically removes acetyl and succinyl groups on target proteins. Modulates the activities of several proteins which are inactive in their acylated form. The chain is NAD-dependent protein deacylase from Corynebacterium glutamicum (strain ATCC 13032 / DSM 20300 / JCM 1318 / BCRC 11384 / CCUG 27702 / LMG 3730 / NBRC 12168 / NCIMB 10025 / NRRL B-2784 / 534).